A 490-amino-acid polypeptide reads, in one-letter code: Flap endonuclease 1 (490 aa).

An N-domain region spans residues Met-1 to Arg-106. A Mg(2+)-binding site is contributed by Asp-34. DNA is bound by residues Arg-47 and Arg-72. Residues Asp-88, Glu-160, Glu-162, Asp-181, and Asp-183 each contribute to the Mg(2+) site. An I-domain region spans residues Leu-124–Tyr-266. Glu-160 serves as a coordination point for DNA. The DNA site is built by Gly-244 and Asp-246. Asp-246 serves as a coordination point for Mg(2+). An interaction with PCNA region spans residues Ser-351–Phe-359. Disordered regions lie at residues Asn-364–Cys-396 and Ser-421–Asp-490. Residues Glu-430–Ile-442 show a composition bias toward polar residues. Basic and acidic residues predominate over residues Lys-443 to Glu-454. Residues Ser-455–Pro-469 show a composition bias toward polar residues.

The protein belongs to the XPG/RAD2 endonuclease family. FEN1 subfamily. In terms of assembly, interacts with PCNA. Three molecules of FEN1 bind to one PCNA trimer with each molecule binding to one PCNA monomer. PCNA stimulates the nuclease activity without altering cleavage specificity. The cofactor is Mg(2+). Phosphorylated. Phosphorylation upon DNA damage induces relocalization to the nuclear plasma.

It localises to the nucleus. The protein localises to the nucleolus. The protein resides in the nucleoplasm. Its subcellular location is the mitochondrion. Functionally, structure-specific nuclease with 5'-flap endonuclease and 5'-3' exonuclease activities involved in DNA replication and repair. During DNA replication, cleaves the 5'-overhanging flap structure that is generated by displacement synthesis when DNA polymerase encounters the 5'-end of a downstream Okazaki fragment. It enters the flap from the 5'-end and then tracks to cleave the flap base, leaving a nick for ligation. Also involved in the long patch base excision repair (LP-BER) pathway, by cleaving within the apurinic/apyrimidinic (AP) site-terminated flap. Acts as a genome stabilization factor that prevents flaps from equilibrating into structures that lead to duplications and deletions. Also possesses 5'-3' exonuclease activity on nicked or gapped double-stranded DNA, and exhibits RNase H activity. Also involved in replication and repair of rDNA and in repairing mitochondrial DNA. The chain is Flap endonuclease 1 from Cryptosporidium parvum (strain Iowa II).